The primary structure comprises 121 residues: Large ribosomal subunit protein uL14 (121 aa).

It belongs to the universal ribosomal protein uL14 family. Part of the 50S ribosomal subunit. Forms a cluster with proteins L3 and L19. In the 70S ribosome, L14 and L19 interact and together make contacts with the 16S rRNA in bridges B5 and B8.

Functionally, binds to 23S rRNA. Forms part of two intersubunit bridges in the 70S ribosome. The chain is Large ribosomal subunit protein uL14 from Prochlorococcus marinus (strain MIT 9515).